The chain runs to 1794 residues: Non-reducing polyketide synthase nscA (1794 aa).

The tract at residues 19 to 256 is N-terminal acylcarrier protein transacylase domain (SAT); that stretch reads DLKDLFRRLH…PLPVYDGLCH (238 aa). Residues 389–822 form the Ketosynthase family 3 (KS3) domain; sequence ASKLAIVGMA…GGNTTVLLED (434 aa). The disordered stretch occupies residues 427-448; the sequence is PDRFDLNTHYDPTGKTENATQT. Over residues 428–440 the composition is skewed to basic and acidic residues; that stretch reads DRFDLNTHYDPTG. Active-site for beta-ketoacyl synthase activity residues include C562, H697, and H740. The interval 928 to 1249 is malonyl-CoA:ACP transacylase (MAT) domain; that stretch reads FTGQGAYYSG…LVTLHLAGLT (322 aa). A product template (PT) domain region spans residues 1314-1633; that stretch reads TSLVHQITAE…RLLMDRFFSP (320 aa). Positions 1318–1454 are N-terminal hotdog fold; that stretch reads HQITAETVEA…GVVRFEDPAA (137 aa). Positions 1318 to 1628 constitute a PKS/mFAS DH domain; sequence HQITAETVEA…FRRVPRLLMD (311 aa). H1350 (proton acceptor; for dehydratase activity) is an active-site residue. The interval 1482-1628 is C-terminal hotdog fold; it reads ASKLSKPLAY…FRRVPRLLMD (147 aa). D1539 functions as the Proton donor; for dehydratase activity in the catalytic mechanism. Disordered regions lie at residues 1637-1665 and 1682-1718; these read SHAEKQLQETAPSATSVKKSTPPAAEAPA and ASKSEVSTPPLTPPSQQESPGESAVITPATSDRGDPV. Polar residues-rich tracts occupy residues 1644 to 1655 and 1685 to 1701; these read QETAPSATSVKK and SEVSTPPLTPPSQQESP. Positions 1717–1794 constitute a Carrier domain; sequence PVDAGVVGQC…EMTAWLEEYC (78 aa). S1754 bears the O-(pantetheine 4'-phosphoryl)serine mark.

Requires pantetheine 4'-phosphate as cofactor.

It functions in the pathway secondary metabolite biosynthesis. Functionally, non-reducing polyketide synthase; part of the gene cluster that mediates the biosynthesis of neosartoricin, a prenylated anthracenone that exhibits T-cell antiproliferative activity, suggestive of a physiological role as an immunosuppressive agent. The non-reducing polyketide synthase nscA probably synthesizes and cyclizes the decaketide backbone. The hydrolase nscB then mediates the product release through hydrolysis followed by spontaneous decarboxylation. The prenyltransferase nscD catalyzes the addition of the dimethylallyl group to the aromatic C5. The FAD-dependent monooxygenase nscC is then responsible for the stereospecific hydroxylation at C2. There is no gene encoding O-acetyltransferase in the nsc gene cluster; thus, the last step of 2-O-acetylation leading to neosartoricin may be catalyzed by an unidentified O-acetyltransferase. This chain is Non-reducing polyketide synthase nscA, found in Neosartorya fischeri (strain ATCC 1020 / DSM 3700 / CBS 544.65 / FGSC A1164 / JCM 1740 / NRRL 181 / WB 181) (Aspergillus fischerianus).